A 289-amino-acid chain; its full sequence is Splicing factor C9orf78 homolog (289 aa).

2 disordered regions span residues 1-30 and 85-111; these read MRIT…VRLK and RGKD…RRDE. The interval 5-58 is interaction with SNRNP200; the sequence is GKTFRRRRADSESEEDEQESEEVRLKLEETREVQNLRKRPNGVSAAALLVGEKV. A phosphoserine mark is found at S15 and S17. Y147 is subject to Phosphotyrosine. Residues 232–283 show a composition bias toward basic and acidic residues; it reads LNAPIRRNKEEPKARPLRVGDTEKPEPERSPPNRKRPANEKATDDYHYEKFK. The disordered stretch occupies residues 232–289; sequence LNAPIRRNKEEPKARPLRVGDTEKPEPERSPPNRKRPANEKATDDYHYEKFKKMNRRY. The residue at position 253 (T253) is a Phosphothreonine. A Phosphoserine modification is found at S261.

The protein belongs to the TLS1 family. Component of the spliceosome. Interacts with SNRNP200; the interaction is direct. Interacts with PRPF8.

It localises to the nucleus. The protein localises to the chromosome. Its subcellular location is the centromere. Plays a role in pre-mRNA splicing by promoting usage of the upstream 3'-splice site at alternative NAGNAG splice sites; these are sites featuring alternative acceptor motifs separated by only a few nucleotides. May also modulate exon inclusion events. PPlays a role in spliceosomal remodeling by displacing WBP4 from SNRNP200 and may act to inhibit SNRNP200 helicase activity. Binds U5 snRNA. Required for proper chromosome segregation. Not required for splicing of shelterin components. This Mus musculus (Mouse) protein is Splicing factor C9orf78 homolog.